A 128-amino-acid chain; its full sequence is Large ribosomal subunit protein bL20c (128 aa).

This sequence belongs to the bacterial ribosomal protein bL20 family.

It is found in the plastid. The protein localises to the chloroplast. Functionally, binds directly to 23S ribosomal RNA and is necessary for the in vitro assembly process of the 50S ribosomal subunit. It is not involved in the protein synthesizing functions of that subunit. This is Large ribosomal subunit protein bL20c from Trachelium caeruleum (Blue throatwort).